Reading from the N-terminus, the 90-residue chain is DNA-binding protein HU (90 aa).

This sequence belongs to the bacterial histone-like protein family. In terms of assembly, homodimer.

In terms of biological role, histone-like DNA-binding protein which is capable of wrapping DNA to stabilize it, and thus to prevent its denaturation under extreme environmental conditions. This Pasteurella multocida (strain Pm70) protein is DNA-binding protein HU (hup).